A 232-amino-acid chain; its full sequence is Large ribosomal subunit protein uL1 (232 aa).

This sequence belongs to the universal ribosomal protein uL1 family. As to quaternary structure, part of the 50S ribosomal subunit.

Functionally, binds directly to 23S rRNA. The L1 stalk is quite mobile in the ribosome, and is involved in E site tRNA release. In terms of biological role, protein L1 is also a translational repressor protein, it controls the translation of the L11 operon by binding to its mRNA. The protein is Large ribosomal subunit protein uL1 of Xylella fastidiosa (strain 9a5c).